The chain runs to 352 residues: Maleylacetate reductase (352 aa).

Belongs to the iron-containing alcohol dehydrogenase family.

It catalyses the reaction 3-oxoadipate + NAD(+) = maleylacetate + NADH + H(+). It carries out the reaction 3-oxoadipate + NADP(+) = maleylacetate + NADPH + H(+). Its pathway is aromatic compound metabolism; 3-chlorocatechol degradation. The polypeptide is Maleylacetate reductase (tcbF) (Pseudomonas sp. (strain P51)).